A 498-amino-acid chain; its full sequence is Ribulose bisphosphate carboxylase large chain (498 aa).

A propeptide spanning residues 1-2 is cleaved from the precursor; sequence MS. N-acetylproline is present on Pro-3. Position 14 is an N6,N6,N6-trimethyllysine (Lys-14). Substrate-binding residues include Asn-123 and Thr-173. Lys-175 functions as the Proton acceptor in the catalytic mechanism. Substrate is bound at residue Lys-177. Mg(2+) contacts are provided by Lys-201, Asp-203, and Glu-204. An N6-carboxylysine modification is found at Lys-201. Catalysis depends on His-294, which acts as the Proton acceptor. Residues Arg-295, His-327, and Ser-379 each contribute to the substrate site. Residues 473-498 form a disordered region; it reads DTLDPNDKKQRDNEDTLADKFFGDKG.

This sequence belongs to the RuBisCO large chain family. Type I subfamily. Heterohexadecamer of 8 large chains and 8 small chains; disulfide-linked. The disulfide link is formed within the large subunit homodimers. It depends on Mg(2+) as a cofactor. Post-translationally, the disulfide bond which can form in the large chain dimeric partners within the hexadecamer appears to be associated with oxidative stress and protein turnover.

The protein resides in the plastid. The enzyme catalyses 2 (2R)-3-phosphoglycerate + 2 H(+) = D-ribulose 1,5-bisphosphate + CO2 + H2O. The catalysed reaction is D-ribulose 1,5-bisphosphate + O2 = 2-phosphoglycolate + (2R)-3-phosphoglycerate + 2 H(+). Its function is as follows. RuBisCO catalyzes two reactions: the carboxylation of D-ribulose 1,5-bisphosphate, the primary event in carbon dioxide fixation, as well as the oxidative fragmentation of the pentose substrate in the photorespiration process. Both reactions occur simultaneously and in competition at the same active site. The sequence is that of Ribulose bisphosphate carboxylase large chain from Cuscuta exaltata (Tall dodder).